The following is a 440-amino-acid chain: Histidinol dehydrogenase (440 aa).

Y139, Q201, and N224 together coordinate NAD(+). Substrate is bound by residues S247, Q269, and H272. Q269 and H272 together coordinate Zn(2+). Catalysis depends on proton acceptor residues E337 and H338. Positions 338, 371, 425, and 430 each coordinate substrate. Residue D371 participates in Zn(2+) binding. H430 contributes to the Zn(2+) binding site.

It belongs to the histidinol dehydrogenase family. Requires Zn(2+) as cofactor.

It catalyses the reaction L-histidinol + 2 NAD(+) + H2O = L-histidine + 2 NADH + 3 H(+). Its pathway is amino-acid biosynthesis; L-histidine biosynthesis; L-histidine from 5-phospho-alpha-D-ribose 1-diphosphate: step 9/9. In terms of biological role, catalyzes the sequential NAD-dependent oxidations of L-histidinol to L-histidinaldehyde and then to L-histidine. The sequence is that of Histidinol dehydrogenase from Prochlorococcus marinus (strain MIT 9312).